Consider the following 1073-residue polypeptide: Carbamoyl phosphate synthase large chain (1073 aa).

Positions 2 to 403 (PKRTDIKSIL…SLQKALRGLE (402 aa)) are carboxyphosphate synthetic domain. The ATP site is built by Arg129, Arg169, Gly175, Gly176, Glu208, Leu210, Glu215, Gly241, Ile242, His243, Gln285, and Glu299. In terms of domain architecture, ATP-grasp 1 spans 133-328 (DVAMKKIGLE…IAKVAAKLAV (196 aa)). Gln285, Glu299, and Asn301 together coordinate Mg(2+). The Mn(2+) site is built by Gln285, Glu299, and Asn301. The segment at 404-553 (VGATGFDPKV…YSTYEEECEA (150 aa)) is oligomerization domain. The tract at residues 554 to 936 (NPSTDREKIM…AFAKAQLGSN (383 aa)) is carbamoyl phosphate synthetic domain. In terms of domain architecture, ATP-grasp 2 spans 679–870 (QHAVERLKLK…LAKVAARVMA (192 aa)). ATP is bound by residues Arg715, His754, Leu756, Glu761, Gly786, Val787, His788, Ser789, Gln829, and Glu841. The Mg(2+) site is built by Gln829, Glu841, and Asn843. Residues Gln829, Glu841, and Asn843 each coordinate Mn(2+). The MGS-like domain maps to 937-1073 (STMKKHGRAL…SVQEMHAQIK (137 aa)). The tract at residues 937 to 1073 (STMKKHGRAL…SVQEMHAQIK (137 aa)) is allosteric domain.

This sequence belongs to the CarB family. Composed of two chains; the small (or glutamine) chain promotes the hydrolysis of glutamine to ammonia, which is used by the large (or ammonia) chain to synthesize carbamoyl phosphate. Tetramer of heterodimers (alpha,beta)4. Mg(2+) serves as cofactor. Mn(2+) is required as a cofactor.

It catalyses the reaction hydrogencarbonate + L-glutamine + 2 ATP + H2O = carbamoyl phosphate + L-glutamate + 2 ADP + phosphate + 2 H(+). The enzyme catalyses hydrogencarbonate + NH4(+) + 2 ATP = carbamoyl phosphate + 2 ADP + phosphate + 2 H(+). It participates in amino-acid biosynthesis; L-arginine biosynthesis; carbamoyl phosphate from bicarbonate: step 1/1. The protein operates within pyrimidine metabolism; UMP biosynthesis via de novo pathway; (S)-dihydroorotate from bicarbonate: step 1/3. In terms of biological role, large subunit of the glutamine-dependent carbamoyl phosphate synthetase (CPSase). CPSase catalyzes the formation of carbamoyl phosphate from the ammonia moiety of glutamine, carbonate, and phosphate donated by ATP, constituting the first step of 2 biosynthetic pathways, one leading to arginine and/or urea and the other to pyrimidine nucleotides. The large subunit (synthetase) binds the substrates ammonia (free or transferred from glutamine from the small subunit), hydrogencarbonate and ATP and carries out an ATP-coupled ligase reaction, activating hydrogencarbonate by forming carboxy phosphate which reacts with ammonia to form carbamoyl phosphate. The protein is Carbamoyl phosphate synthase large chain of Escherichia coli O6:H1 (strain CFT073 / ATCC 700928 / UPEC).